The chain runs to 156 residues: Small ribosomal subunit protein uS7 (156 aa).

It belongs to the universal ribosomal protein uS7 family. As to quaternary structure, part of the 30S ribosomal subunit. Contacts proteins S9 and S11.

In terms of biological role, one of the primary rRNA binding proteins, it binds directly to 16S rRNA where it nucleates assembly of the head domain of the 30S subunit. Is located at the subunit interface close to the decoding center, probably blocks exit of the E-site tRNA. The sequence is that of Small ribosomal subunit protein uS7 from Hamiltonella defensa subsp. Acyrthosiphon pisum (strain 5AT).